The primary structure comprises 287 residues: MHRLMGVNSTAAAAAGQPNVSCTCNCKRSLFQSMEITELEFVQIIIIVVVMMVMVVVITCLLSHYKLSARSFISRHSQGRRREDALSSEGCLWPSESTVSGNGIPEPQVYAPPRPTDRLAVPPFAQRERFHRFQPTYPYLQHEIDLPPTISLSDGEEPPPYQGPCTLQLRDPEQQLELNRESVRAPPNRTIFDSDLMDSARLGGPCPPSSNSGISATCYGSGGRMEGPPPTYSEVIGHYPGSSFQHQQSSGPPSLLEGTRLHHTHIAPLESAAIWSKEKDKQKGHPL.

The Lumenal segment spans residues 1 to 40; the sequence is MHRLMGVNSTAAAAAGQPNVSCTCNCKRSLFQSMEITELE. Residues 41-63 form a helical membrane-spanning segment; it reads FVQIIIIVVVMMVMVVVITCLLS. Residues 64 to 287 lie on the Cytoplasmic side of the membrane; the sequence is HYKLSARSFI…EKDKQKGHPL (224 aa). Positions 158 to 161 match the PPxY motif 1 motif; the sequence is PPPY. The SMAD interaction motif (SIM) signature appears at 186 to 189; sequence PPNR. The short motif at 229–232 is the PPxY motif 2 element; the sequence is PPTY. Residues 239–258 are disordered; the sequence is YPGSSFQHQQSSGPPSLLEG. Residues 242-252 show a composition bias toward polar residues; it reads SSFQHQQSSGP.

It belongs to the PMEPA1 family. As to quaternary structure, interacts with NEDD4 (via PPxY motifs). Interacts with AR. Interacts with LDLRAD4. Interacts (via the SMAD interaction motif) with SMAD2 and SMAD3. In terms of tissue distribution, highest expression in prostate. Also expressed in ovary.

The protein resides in the early endosome membrane. It localises to the golgi apparatus membrane. Its function is as follows. Functions as a negative regulator of TGF-beta signaling and thereby probably plays a role in cell proliferation, differentiation, apoptosis, motility, extracellular matrix production and immunosuppression. In the canonical TGF-beta pathway, ZFYVE9/SARA recruits the intracellular signal transducer and transcriptional modulators SMAD2 and SMAD3 to the TGF-beta receptor. Phosphorylated by the receptor, SMAD2 and SMAD3 then form a heteromeric complex with SMAD4 that translocates to the nucleus to regulate transcription. Through interaction with SMAD2 and SMAD3, LDLRAD4 may compete with ZFYVE9 and SMAD4 and prevent propagation of the intracellular signal. Also involved in down-regulation of the androgen receptor (AR), enhancing ubiquitination and proteasome-mediated degradation of AR, probably by recruiting NEDD4. The polypeptide is Protein TMEPAI (PMEPA1) (Homo sapiens (Human)).